We begin with the raw amino-acid sequence, 366 residues long: ATPase ASNA1 homolog (366 aa).

33–40 is an ATP binding site; sequence KGGVGKTT. D62 is a catalytic residue. Residues E234 and N261 each coordinate ATP.

The protein belongs to the arsA ATPase family. In terms of assembly, homodimer.

It is found in the cytoplasm. Its subcellular location is the endoplasmic reticulum. ATPase required for the post-translational delivery of tail-anchored (TA) proteins to the endoplasmic reticulum. Recognizes and selectively binds the transmembrane domain of TA proteins in the cytosol. This complex then targets to the endoplasmic reticulum by membrane-bound receptors, where the tail-anchored protein is released for insertion. This process is regulated by ATP binding and hydrolysis. ATP binding drives the homodimer towards the closed dimer state, facilitating recognition of newly synthesized TA membrane proteins. ATP hydrolysis is required for insertion. Subsequently, the homodimer reverts towards the open dimer state, lowering its affinity for the membrane-bound receptor, and returning it to the cytosol to initiate a new round of targeting. This Cryptosporidium parvum (strain Iowa II) protein is ATPase ASNA1 homolog.